A 119-amino-acid chain; its full sequence is Large ribosomal subunit protein uL18 (119 aa).

This sequence belongs to the universal ribosomal protein uL18 family. Part of the 50S ribosomal subunit; part of the 5S rRNA/L5/L18/L25 subcomplex. Contacts the 5S and 23S rRNAs.

In terms of biological role, this is one of the proteins that bind and probably mediate the attachment of the 5S RNA into the large ribosomal subunit, where it forms part of the central protuberance. The chain is Large ribosomal subunit protein uL18 from Legionella pneumophila (strain Paris).